Reading from the N-terminus, the 349-residue chain is NADH-ubiquinone oxidoreductase chain 2 (349 aa).

10 consecutive transmembrane segments (helical) span residues proline 3 to serine 23, histidine 25 to alanine 45, alanine 66 to isoleucine 86, valine 98 to valine 118, isoleucine 149 to asparagine 171, isoleucine 178 to alanine 197, leucine 202 to leucine 219, leucine 240 to phenylalanine 260, glycine 274 to leucine 294, and phenylalanine 319 to leucine 339.

It belongs to the complex I subunit 2 family.

Its subcellular location is the mitochondrion inner membrane. The catalysed reaction is a ubiquinone + NADH + 5 H(+)(in) = a ubiquinol + NAD(+) + 4 H(+)(out). Its function is as follows. Core subunit of the mitochondrial membrane respiratory chain NADH dehydrogenase (Complex I) that is believed to belong to the minimal assembly required for catalysis. Complex I functions in the transfer of electrons from NADH to the respiratory chain. The immediate electron acceptor for the enzyme is believed to be ubiquinone. This is NADH-ubiquinone oxidoreductase chain 2 (MT-ND2) from Salmo salar (Atlantic salmon).